Consider the following 138-residue polypeptide: Large ribosomal subunit protein uL16 (138 aa).

Over residues 1 to 14 (MLQPKRTKYRRTHR) the composition is skewed to basic residues. Positions 1–24 (MLQPKRTKYRRTHRLQHDKGEAHT) are disordered. Residues 15-24 (LQHDKGEAHT) show a composition bias toward basic and acidic residues.

It belongs to the universal ribosomal protein uL16 family. As to quaternary structure, part of the 50S ribosomal subunit.

In terms of biological role, binds 23S rRNA and is also seen to make contacts with the A and possibly P site tRNAs. This chain is Large ribosomal subunit protein uL16, found in Mycoplasma mobile (strain ATCC 43663 / 163K / NCTC 11711) (Mesomycoplasma mobile).